The following is a 1181-amino-acid chain: WD repeat-containing protein 35 (1181 aa).

5 WD repeats span residues 12–51 (PNNV…DDSK), 69–108 (GHSG…WYEE), 113–152 (RNKS…IWGK), 154–193 (LKGI…IMKM), and 502–539 (GTRD…LIQK).

Component of the IFT complex A (IFT-A) complex. IFT-A complex is divided into a core subcomplex composed of IFT122:IFT140:WDR19 which is associated with TULP3 and a peripheral subcomplex composed of IFT43:WDR35:TTC21B. Interacts directy with IFT122, ITF43 and TTC21B. Interacts with IFT43. Interacts with CFAP61.

It is found in the cytoplasm. It localises to the cytoskeleton. Its subcellular location is the microtubule organizing center. The protein resides in the centrosome. The protein localises to the cilium axoneme. It is found in the cilium basal body. Its function is as follows. As a component of the IFT complex A (IFT-A), a complex required for retrograde ciliary transport and entry into cilia of G protein-coupled receptors (GPCRs), it is involved in ciliogenesis and ciliary protein trafficking. May promote CASP3 activation and TNF-stimulated apoptosis. The polypeptide is WD repeat-containing protein 35 (Mus musculus (Mouse)).